Here is a 415-residue protein sequence, read N- to C-terminus: Peptide chain release factor subunit 1 (415 aa).

It belongs to the eukaryotic release factor 1 family. In terms of assembly, heterodimer of two subunits, one of which binds GTP.

Its subcellular location is the cytoplasm. Its function is as follows. Directs the termination of nascent peptide synthesis (translation) in response to the termination codons UAA, UAG and UGA. In Thermococcus sibiricus (strain DSM 12597 / MM 739), this protein is Peptide chain release factor subunit 1.